A 189-amino-acid chain; its full sequence is Ribosome maturation factor RimM (189 aa).

The segment covering 1–16 (MAPSCPTRSRVWSSRT) has biased composition (polar residues). The tract at residues 1–21 (MAPSCPTRSRVWSSRTSPPPD) is disordered. In terms of domain architecture, PRC barrel spans 118–189 (ENEFYWSDLI…TVEVDWGEDY (72 aa)).

It belongs to the RimM family. Binds ribosomal protein uS19.

The protein localises to the cytoplasm. Functionally, an accessory protein needed during the final step in the assembly of 30S ribosomal subunit, possibly for assembly of the head region. Essential for efficient processing of 16S rRNA. May be needed both before and after RbfA during the maturation of 16S rRNA. It has affinity for free ribosomal 30S subunits but not for 70S ribosomes. This Thiobacillus denitrificans (strain ATCC 25259 / T1) protein is Ribosome maturation factor RimM.